The sequence spans 345 residues: Tryptophan--tRNA ligase (345 aa).

ATP contacts are provided by residues 21-23 (QPT) and 30-31 (GN). The 'HIGH' region motif lies at 22-31 (PTADSYHLGN). D147 is an L-tryptophan binding site. Residues 159 to 161 (GED), I198, and 207 to 211 (KMSKS) each bind ATP. The short motif at 207–211 (KMSKS) is the 'KMSKS' region element.

The protein belongs to the class-I aminoacyl-tRNA synthetase family. In terms of assembly, homodimer.

The protein localises to the cytoplasm. The enzyme catalyses tRNA(Trp) + L-tryptophan + ATP = L-tryptophyl-tRNA(Trp) + AMP + diphosphate + H(+). Catalyzes the attachment of tryptophan to tRNA(Trp). The polypeptide is Tryptophan--tRNA ligase (Corynebacterium glutamicum (strain ATCC 13032 / DSM 20300 / JCM 1318 / BCRC 11384 / CCUG 27702 / LMG 3730 / NBRC 12168 / NCIMB 10025 / NRRL B-2784 / 534)).